The primary structure comprises 304 residues: Oxygen-dependent coproporphyrinogen-III oxidase (304 aa).

Serine 94 is a substrate binding site. Positions 98 and 108 each coordinate a divalent metal cation. Histidine 108 (proton donor) is an active-site residue. 110 to 112 is a substrate binding site; that stretch reads NVR. A divalent metal cation contacts are provided by histidine 147 and histidine 177. Residues 242 to 277 are important for dimerization; the sequence is YVEFNLVYDRGTLFGLQTGGRTESILMSMPPLVRWE. Residue 260–262 coordinates substrate; sequence GGR.

Belongs to the aerobic coproporphyrinogen-III oxidase family. Homodimer. A divalent metal cation serves as cofactor.

It is found in the cytoplasm. The catalysed reaction is coproporphyrinogen III + O2 + 2 H(+) = protoporphyrinogen IX + 2 CO2 + 2 H2O. It participates in porphyrin-containing compound metabolism; protoporphyrin-IX biosynthesis; protoporphyrinogen-IX from coproporphyrinogen-III (O2 route): step 1/1. Involved in the heme biosynthesis. Catalyzes the aerobic oxidative decarboxylation of propionate groups of rings A and B of coproporphyrinogen-III to yield the vinyl groups in protoporphyrinogen-IX. This Shewanella piezotolerans (strain WP3 / JCM 13877) protein is Oxygen-dependent coproporphyrinogen-III oxidase.